The chain runs to 653 residues: Potassium voltage-gated channel subfamily A member 4 (653 aa).

The Cytoplasmic segment spans residues M1–S304. Positions Q24–G148 are disordered. Positions S36–E52 are enriched in low complexity. The span at G81–Y97 shows a compositional bias: basic residues. Phosphoserine; by PKA is present on S90. Residue S122 is modified to Phosphoserine. Residues S122–E137 show a composition bias toward acidic residues. The chain crosses the membrane as a helical span at residues P305 to L326. Residues E327 to P370 lie on the Extracellular side of the membrane. N-linked (GlcNAc...) asparagine glycosylation occurs at N352. A helical transmembrane segment spans residues F371 to A392. Residues C393–I403 lie on the Cytoplasmic side of the membrane. The chain crosses the membrane as a helical span at residues M404–A424. Residues Q425 to S439 are Extracellular-facing. The chain crosses the membrane as a helical; Voltage-sensor span at residues F440–H460. Residues S461–M475 lie on the Cytoplasmic side of the membrane. The segment at K462 to M475 is S4-S5 linker. Residues R476–Y497 form a helical membrane-spanning segment. Over F498 to I511 the chain is Extracellular. An intramembrane region (helical) is located at residues P512 to T523. The short motif at T524–D529 is the Selectivity filter element. An intramembrane segment occupies T524–K531. The Extracellular portion of the chain corresponds to P532 to K538. Residues I539–Y567 form a helical membrane-spanning segment. The Cytoplasmic portion of the chain corresponds to H568–V653. Residue S599 is modified to Phosphoserine; by PKA. Residues C629–K640 are compositionally biased toward basic and acidic residues. Positions C629–V653 are disordered. Positions T651 to V653 match the PDZ-binding motif.

This sequence belongs to the potassium channel family. A (Shaker) (TC 1.A.1.2) subfamily. Kv1.4/KCNA4 sub-subfamily. As to quaternary structure, homotetramer and heterotetramer of potassium channel proteins. Interacts with KCNAB1 and KCNAB2. Interacts with DLG1, DLG2 and DLG4 via their PDZ domains. Interacts with SIGMAR1. Detected in a complex with KCNA1. Interacts with KCNA2. Part of a complex containing KCNA1, KCNAB1 and LGI1. Interacts (via cytoplasmic N-terminal domain) with KCNRG. Expressed in brain, and at lower levels in the testis, lung, kidney, colon and heart. Detected in heart ventricle.

It localises to the cell membrane. Its subcellular location is the cell projection. It is found in the axon. The enzyme catalyses K(+)(in) = K(+)(out). With respect to regulation, inhibited by 4-aminopyridine (4-AP), but not by tetraethylammonium (TEA) and charybdotoxin (CTX). Its function is as follows. Voltage-gated potassium channel that mediates transmembrane potassium transport in excitable membranes. Forms tetrameric potassium-selective channels through which potassium ions pass in accordance with their electrochemical gradient. The channel alternates between opened and closed conformations in response to the voltage difference across the membrane. Can form functional homotetrameric channels and heterotetrameric channels that contain variable proportions of KCNA1, KCNA2, KCNA4, KCNA5, and possibly other family members as well; channel properties depend on the type of alpha subunits that are part of the channel. Channel properties are modulated by cytoplasmic beta subunits that regulate the subcellular location of the alpha subunits and promote rapid inactivation. In vivo, membranes probably contain a mixture of heteromeric potassium channel complexes, making it difficult to assign currents observed in intact tissues to any particular potassium channel family member. Homotetrameric KCNA4 forms a potassium channel that opens in response to membrane depolarization, followed by rapid spontaneous channel closure. Likewise, a heterotetrameric channel formed by KCNA1 and KCNA4 shows rapid inactivation. The sequence is that of Potassium voltage-gated channel subfamily A member 4 (KCNA4) from Homo sapiens (Human).